We begin with the raw amino-acid sequence, 1453 residues long: NRPS-like tryptophan epimerase fscC (1453 aa).

The tract at residues 37 to 433 is adenylation; the sequence is SYGELSAMSS…ATHLIRNCVV (397 aa). One can recognise a Carrier domain in the interval 544–626; that stretch reads TGSRQSTRHK…LFHTSKSRFT (83 aa). Position 586 is an O-(pantetheine 4'-phosphoryl)serine (Ser-586). The segment at 639 to 1053 is epimerization (E) domain; the sequence is FPLSPVQRFF…KDVLESAGVF (415 aa). The segment at 1181 to 1391 is condensation; it reads FFGLQSNERA…AGSSLHQHNQ (211 aa).

Belongs to the NRP synthetase family. Requires pantetheine 4'-phosphate as cofactor.

Its pathway is secondary metabolite biosynthesis. NRPS-like tryptophan epimerase; part of the fragmented gene cluster that mediates the biosynthesis of fusarochromene, a tryptophan-derived metabolite closely related to a group of mycotoxins including fusarochromanone. Within the pathway, fscC catalyzes the first step via epimerization of L-tryptophan to provide the intermediate D-tryptophan. D-tryptophan is subsequently hydroxylated by the tryptophan 6-hydroxylase fscE to yield 6-hydroxytryptophan. The pyrrole ring undergoes cleavaged by the tryptophan 2,3-dioxygenase fscD and is finally converted to 4-hydroxykyrunenine by the hydrolase fscH. The NRPS-like oxidoreductase fscA reduces the carboxyl group to primary alcohol and the DMATS-type prenyltransferase fscG performs prenylation, followed by the formation of a chromene ring catalyzed by the oxidoreductase fscI, which leads to desacetylfusarochromene. Epoxidation by fscF and rearrangement reactions of chromene double bonds convert compound desacetylfusarochromene to fusarochromanones. Although specific acetyltransferases were not found near the fsc gene cluster, several predicted enzymes containing the N-acetyltransferase superfamily domain are present in the genome of F.equiseti. These predicted enzymes may have the potential to convert desacetylfusarochromene to fusarochromene. In Fusarium equiseti (Fusarium scirpi), this protein is NRPS-like tryptophan epimerase fscC.